A 172-amino-acid polypeptide reads, in one-letter code: Photosystem I assembly protein Ycf3 (172 aa).

3 TPR repeats span residues 35–70 (AFTYYRDGAIMLAQSEGNYAEALQNYYEATRLEIDP), 74–107 (SYILYNIGLIHTSNGEHTKALEYYFRALERNPFL), and 122–155 (GEQAILQGDSEIAEAWFDQAAEYWKQAIALTPGN).

This sequence belongs to the Ycf3 family.

Its subcellular location is the plastid. It is found in the chloroplast thylakoid membrane. Its function is as follows. Essential for the assembly of the photosystem I (PSI) complex. May act as a chaperone-like factor to guide the assembly of the PSI subunits. The polypeptide is Photosystem I assembly protein Ycf3 (Sorghum bicolor (Sorghum)).